We begin with the raw amino-acid sequence, 156 residues long: U4/U6.U5 small nuclear ribonucleoprotein 27 kDa protein (156 aa).

A disordered region spans residues 1 to 98 (MGRSRSRSPE…IAAEDLEGKT (98 aa)). The segment covering 13–59 (RERRRSRSASRERERRRRERSRSRERRRSRSRSPHRRRSRSPRRHRS) has biased composition (basic residues). Over residues 66 to 98 (RLKDRRDDDKKDSKESKGAKERQIAAEDLEGKT) the composition is skewed to basic and acidic residues.

Belongs to the SNUT3 family. Part of a tri-snRNP complex.

The protein resides in the nucleus. Its function is as follows. May play a role in mRNA splicing. The sequence is that of U4/U6.U5 small nuclear ribonucleoprotein 27 kDa protein (snrnp27) from Xenopus tropicalis (Western clawed frog).